Here is a 92-residue protein sequence, read N- to C-terminus: YcgL domain-containing protein Sputcn32_1766 (92 aa).

In terms of domain architecture, YcgL spans 1–85; that stretch reads MLCTVYKSTR…PQVNLLAEHK (85 aa).

The chain is YcgL domain-containing protein Sputcn32_1766 from Shewanella putrefaciens (strain CN-32 / ATCC BAA-453).